A 297-amino-acid chain; its full sequence is uncharacterized protein (297 aa).

Residue E46 is part of the active site.

Belongs to the PhzF family. As to quaternary structure, homodimer and homotetramer.

This is an uncharacterized protein from Escherichia coli O157:H7.